We begin with the raw amino-acid sequence, 453 residues long: Flap endonuclease 1 (453 aa).

Residues 1-105 are N-domain; sequence MGIKGLTGLL…SVLAKRFARR (105 aa). Aspartate 34 serves as a coordination point for Mg(2+). DNA-binding residues include arginine 47 and arginine 71. The Mg(2+) site is built by aspartate 87, glutamate 159, glutamate 161, aspartate 180, and aspartate 182. The segment at 123–254 is I-domain; that stretch reads DVDKLARRQV…KTALKLMREH (132 aa). Glutamate 159 contributes to the DNA binding site. Residues glycine 232 and aspartate 234 each coordinate DNA. Residue aspartate 234 participates in Mg(2+) binding. 2 disordered regions span residues 273 to 336 and 409 to 453; these read EEIK…VASS and RLDG…KSKN. Basic residues predominate over residues 320 to 333; sequence KSPKKKAPAKKKKV. An interaction with PCNA region spans residues 406–414; that stretch reads QQGRLDGFF. Positions 417 to 446 are enriched in basic and acidic residues; it reads KPKEPAAKDTGKGKGKATKGEKRKAEEKGS.

It belongs to the XPG/RAD2 endonuclease family. FEN1 subfamily. In terms of assembly, interacts with PCNA. Three molecules of FEN1 bind to one PCNA trimer with each molecule binding to one PCNA monomer. PCNA stimulates the nuclease activity without altering cleavage specificity. It depends on Mg(2+) as a cofactor. Phosphorylated. Phosphorylation upon DNA damage induces relocalization to the nuclear plasma.

The protein localises to the nucleus. The protein resides in the nucleolus. Its subcellular location is the nucleoplasm. It localises to the mitochondrion. Its function is as follows. Structure-specific nuclease with 5'-flap endonuclease and 5'-3' exonuclease activities involved in DNA replication and repair. During DNA replication, cleaves the 5'-overhanging flap structure that is generated by displacement synthesis when DNA polymerase encounters the 5'-end of a downstream Okazaki fragment. It enters the flap from the 5'-end and then tracks to cleave the flap base, leaving a nick for ligation. Also involved in the long patch base excision repair (LP-BER) pathway, by cleaving within the apurinic/apyrimidinic (AP) site-terminated flap. Acts as a genome stabilization factor that prevents flaps from equilibrating into structures that lead to duplications and deletions. Also possesses 5'-3' exonuclease activity on nicked or gapped double-stranded DNA, and exhibits RNase H activity. Also involved in replication and repair of rDNA and in repairing mitochondrial DNA. The protein is Flap endonuclease 1 of Cryptococcus neoformans var. neoformans serotype D (strain B-3501A) (Filobasidiella neoformans).